The following is a 271-amino-acid chain: 5'-AMP-activated protein kinase subunit beta-2 (271 aa).

The tract at residues 1–47 (MGNTTSERVSGERHGAKAARAEGGGHGPGKEHKIMVGSTDDPSVFSL) is disordered. Position 38 is a phosphoserine; by ULK1 (Ser38). Thr39 is modified (phosphothreonine; by ULK1). Ser68 carries the post-translational modification Phosphoserine; by ULK1. A phosphoserine mark is found at Ser94 and Ser107. Thr147 carries the post-translational modification Phosphothreonine. 2 positions are modified to phosphoserine: Ser157 and Ser169. Ser173 carries the post-translational modification Phosphoserine; by ULK1. Ser183 bears the Phosphoserine mark.

This sequence belongs to the 5'-AMP-activated protein kinase beta subunit family. AMPK is a heterotrimer of an alpha catalytic subunit (PRKAA1 or PRKAA2), a beta (PRKAB1 or PRKAB2) and a gamma non-catalytic subunits (PRKAG1, PRKAG2 or PRKAG3). Phosphorylated when associated with the catalytic subunit (PRKAA1 or PRKAA2). Phosphorylated by ULK1 and ULK2; leading to negatively regulate AMPK activity and suggesting the existence of a regulatory feedback loop between ULK1, ULK2 and AMPK.

In terms of biological role, non-catalytic subunit of AMP-activated protein kinase (AMPK), an energy sensor protein kinase that plays a key role in regulating cellular energy metabolism. In response to reduction of intracellular ATP levels, AMPK activates energy-producing pathways and inhibits energy-consuming processes: inhibits protein, carbohydrate and lipid biosynthesis, as well as cell growth and proliferation. AMPK acts via direct phosphorylation of metabolic enzymes, and by longer-term effects via phosphorylation of transcription regulators. Also acts as a regulator of cellular polarity by remodeling the actin cytoskeleton; probably by indirectly activating myosin. Beta non-catalytic subunit acts as a scaffold on which the AMPK complex assembles, via its C-terminus that bridges alpha (PRKAA1 or PRKAA2) and gamma subunits (PRKAG1, PRKAG2 or PRKAG3). The protein is 5'-AMP-activated protein kinase subunit beta-2 (Prkab2) of Rattus norvegicus (Rat).